The chain runs to 203 residues: Translation initiation factor IF-3 (203 aa).

Positions 168–203 (QLSPKKKESATKKPATPKPATPAAVKAEKPAGDNEE) are disordered. Residues 193–203 (KAEKPAGDNEE) show a composition bias toward basic and acidic residues.

Belongs to the IF-3 family. As to quaternary structure, monomer.

It is found in the cytoplasm. IF-3 binds to the 30S ribosomal subunit and shifts the equilibrium between 70S ribosomes and their 50S and 30S subunits in favor of the free subunits, thus enhancing the availability of 30S subunits on which protein synthesis initiation begins. This chain is Translation initiation factor IF-3, found in Bacteroides fragilis (strain ATCC 25285 / DSM 2151 / CCUG 4856 / JCM 11019 / LMG 10263 / NCTC 9343 / Onslow / VPI 2553 / EN-2).